Reading from the N-terminus, the 211-residue chain is Glycerol-3-phosphate acyltransferase (211 aa).

5 helical membrane-spanning segments follow: residues 8–28, 84–104, 116–136, 145–165, and 170–190; these read YCLA…LILT, LALP…WLGF, VLLA…FAVA, AALC…GMGL, and LAQS…LVFL.

It belongs to the PlsY family. Probably interacts with PlsX.

It is found in the cell inner membrane. The catalysed reaction is an acyl phosphate + sn-glycerol 3-phosphate = a 1-acyl-sn-glycero-3-phosphate + phosphate. Its pathway is lipid metabolism; phospholipid metabolism. Its function is as follows. Catalyzes the transfer of an acyl group from acyl-phosphate (acyl-PO(4)) to glycerol-3-phosphate (G3P) to form lysophosphatidic acid (LPA). This enzyme utilizes acyl-phosphate as fatty acyl donor, but not acyl-CoA or acyl-ACP. The chain is Glycerol-3-phosphate acyltransferase from Granulibacter bethesdensis (strain ATCC BAA-1260 / CGDNIH1).